The primary structure comprises 101 residues: Salivary thrombin inhibitor anophelin (101 aa).

The first 21 residues, 1 to 21 (MASKVIVIALLCIALAAFVQG), serve as a signal peptide directing secretion. A disordered region spans residues 26–101 (THGEEPEYDE…SDSSSGSTEN (76 aa)). Acidic residues predominate over residues 31–40 (PEYDEDDGAD). Positions 75–78 (DPGR) are blocks active site cleft of host thrombin in a reverse direction compared to substrates. Over residues 75 to 87 (DPGRRPEFLKQHN) the composition is skewed to basic and acidic residues. The span at 88-101 (NENQSDSSSGSTEN) shows a compositional bias: polar residues. Asn-90 is a glycosylation site (N-linked (GlcNAc...) asparagine).

It belongs to the anophelin family. In terms of assembly, interacts with human F2 (thrombin); the interaction results in thrombin inhibition.

The protein resides in the secreted. In terms of biological role, salivary protein with anticoagulant activity that inhibits host thrombin (F2). This is Salivary thrombin inhibitor anophelin from Anopheles stephensi (Indo-Pakistan malaria mosquito).